A 312-amino-acid polypeptide reads, in one-letter code: Cell division control protein 2 homolog D (312 aa).

A Protein kinase domain is found at 14-304; that stretch reads FVKLEKVGEG…AKKAMEHPYF (291 aa). ATP contacts are provided by residues 20–28 and Lys-43; that span reads VGEGTYGKV. Position 24 is a phosphothreonine (Thr-24). Tyr-25 carries the post-translational modification Phosphotyrosine. Asp-145 (proton acceptor) is an active-site residue. A Phosphothreonine; by CAK modification is found at Thr-179.

The protein belongs to the protein kinase superfamily. CMGC Ser/Thr protein kinase family. CDC2/CDKX subfamily.

It catalyses the reaction L-seryl-[protein] + ATP = O-phospho-L-seryl-[protein] + ADP + H(+). The enzyme catalyses L-threonyl-[protein] + ATP = O-phospho-L-threonyl-[protein] + ADP + H(+). It carries out the reaction [DNA-directed RNA polymerase] + ATP = phospho-[DNA-directed RNA polymerase] + ADP + H(+). Its function is as follows. Plays a key role in the control of the eukaryotic cell cycle. The sequence is that of Cell division control protein 2 homolog D (CDC2D) from Antirrhinum majus (Garden snapdragon).